A 387-amino-acid chain; its full sequence is UDP-N-acetylglucosamine--N-acetylmuramyl-(pentapeptide) pyrophosphoryl-undecaprenol N-acetylglucosamine transferase (387 aa).

Residues 26-28 (TGG), N137, R177, S205, and Q306 contribute to the UDP-N-acetyl-alpha-D-glucosamine site.

Belongs to the glycosyltransferase 28 family. MurG subfamily.

It is found in the cell inner membrane. The catalysed reaction is di-trans,octa-cis-undecaprenyl diphospho-N-acetyl-alpha-D-muramoyl-L-alanyl-D-glutamyl-meso-2,6-diaminopimeloyl-D-alanyl-D-alanine + UDP-N-acetyl-alpha-D-glucosamine = di-trans,octa-cis-undecaprenyl diphospho-[N-acetyl-alpha-D-glucosaminyl-(1-&gt;4)]-N-acetyl-alpha-D-muramoyl-L-alanyl-D-glutamyl-meso-2,6-diaminopimeloyl-D-alanyl-D-alanine + UDP + H(+). The protein operates within cell wall biogenesis; peptidoglycan biosynthesis. Its function is as follows. Cell wall formation. Catalyzes the transfer of a GlcNAc subunit on undecaprenyl-pyrophosphoryl-MurNAc-pentapeptide (lipid intermediate I) to form undecaprenyl-pyrophosphoryl-MurNAc-(pentapeptide)GlcNAc (lipid intermediate II). In Rhodospirillum rubrum (strain ATCC 11170 / ATH 1.1.1 / DSM 467 / LMG 4362 / NCIMB 8255 / S1), this protein is UDP-N-acetylglucosamine--N-acetylmuramyl-(pentapeptide) pyrophosphoryl-undecaprenol N-acetylglucosamine transferase.